Here is a 75-residue protein sequence, read N- to C-terminus: Large ribosomal subunit protein bL28 (75 aa).

The disordered stretch occupies residues 1 to 21; sequence MARVCQVTGKRPMSGNKRSHA.

The protein belongs to the bacterial ribosomal protein bL28 family.

This chain is Large ribosomal subunit protein bL28, found in Blochmanniella pennsylvanica (strain BPEN).